Here is a 252-residue protein sequence, read N- to C-terminus: 2-succinyl-6-hydroxy-2,4-cyclohexadiene-1-carboxylate synthase (252 aa).

The protein belongs to the AB hydrolase superfamily. MenH family. In terms of assembly, monomer.

The enzyme catalyses 5-enolpyruvoyl-6-hydroxy-2-succinyl-cyclohex-3-ene-1-carboxylate = (1R,6R)-6-hydroxy-2-succinyl-cyclohexa-2,4-diene-1-carboxylate + pyruvate. Its pathway is quinol/quinone metabolism; 1,4-dihydroxy-2-naphthoate biosynthesis; 1,4-dihydroxy-2-naphthoate from chorismate: step 3/7. It participates in quinol/quinone metabolism; menaquinone biosynthesis. Catalyzes a proton abstraction reaction that results in 2,5-elimination of pyruvate from 2-succinyl-5-enolpyruvyl-6-hydroxy-3-cyclohexene-1-carboxylate (SEPHCHC) and the formation of 2-succinyl-6-hydroxy-2,4-cyclohexadiene-1-carboxylate (SHCHC). The sequence is that of 2-succinyl-6-hydroxy-2,4-cyclohexadiene-1-carboxylate synthase from Escherichia coli O81 (strain ED1a).